The primary structure comprises 271 residues: Nodulin-26 (271 aa).

A run of 2 helical transmembrane segments spans residues 40 to 62 and 72 to 94; these read LVAEAVGTYFLIFAGCASLVVNE and GIAIVWGLVLTVLVYTVGHISGG. The NPA 1 signature appears at 97–99; it reads NPA. A run of 3 helical transmembrane segments spans residues 115 to 137, 152 to 174, and 181 to 203; these read VPAYVVAQLLGSILASGTLRLLF, TNLQAFVFEFIMTFFLMFVICGV, and VGEFAGIAIGSTLLLNVIIGGPV. An NPA 2 motif is present at residues 209–211; that stretch reads NPA. Residues 225-247 form a helical membrane-spanning segment; the sequence is GIWIYLLAPVVGAIAGAWVYNIV. At serine 262 the chain carries Phosphoserine; by CPK.

Belongs to the MIP/aquaporin (TC 1.A.8) family. NIP (TC 1.A.8.12) subfamily.

Its subcellular location is the symbiosome. It localises to the peribacteroid membrane. Aquaporins facilitate the transport of water and small neutral solutes across cell membranes. This aquaporin may function in transporting small molecules across the peribacteroid membranes. This is Nodulin-26 from Glycine max (Soybean).